Here is a 245-residue protein sequence, read N- to C-terminus: MNGRADFREPNAEVPRPIPHIGPDYIPTEEERRVFAECNDESFWFRSVPLAATSMLITQGLISKGILSSHPKYGSIPKLIFACIMGYFAGKLSYVKTCQEKFKKLENSPLGEALRSGQARRSSPPGHYYQKSKYDSNVSGQSSFVTSPAADNIEMLPHYEPIPFSSSMNESAPTGITDHIVQGPDPNLEESPKRKNITYEELRNKNRESYEVSLTQKTDPSVRPMHERVPKKEVKVNKYGDTWDE.

An OCIA domain is found at 1–112 (MNGRADFREP…KKLENSPLGE (112 aa)). 3 positions are modified to phosphoserine: serine 108, serine 116, and serine 123. Disordered regions lie at residues 111 to 142 (GEAL…SGQS) and 164 to 245 (FSSS…TWDE). Positions 164–174 (FSSSMNESAPT) are enriched in polar residues. Composition is skewed to basic and acidic residues over residues 190-210 (ESPK…RESY) and 224-238 (PMHE…KVNK). Residue serine 191 is modified to Phosphoserine.

Belongs to the OCIAD1 family. Interacts with OCIAD2. Interacts with STAT3.

The protein resides in the endosome. Its function is as follows. Maintains stem cell potency. Increases STAT3 phosphorylation and controls ERK phosphorylation. May act as a scaffold, increasing STAT3 recruitment onto endosomes. The chain is OCIA domain-containing protein 1 (OCIAD1) from Pongo abelii (Sumatran orangutan).